We begin with the raw amino-acid sequence, 118 residues long: Myotrophin (118 aa).

C2 carries the post-translational modification N-acetylcysteine. The ANK 1 repeat unit spans residues 2-30 (CDKEFMWALKNGDLDEVKDYVAKGEDVNR). Residues K4, K11, and K24 each carry the N6-acetyllysine modification. T31 carries the post-translational modification Phosphothreonine. 2 ANK repeats span residues 34 to 66 (GGRKPLHYAADCGQLEILEFLLLKGADINAPDK) and 67 to 99 (HHITPLLSAVYEGHVSCVKLLLSKGADKTVKGP).

The protein belongs to the myotrophin family. Interacts with RELA. Interacts with the heterodimer formed by CAPZA1 and CAPZB.

It localises to the cytoplasm. The protein resides in the nucleus. It is found in the perinuclear region. Functionally, promotes dimerization of NF-kappa-B subunits and regulates NF-kappa-B transcription factor activity. Promotes growth of cardiomyocytes, but not cardiomyocyte proliferation. Promotes cardiac muscle hypertrophy. Plays a role in the regulation of the growth of actin filaments. Inhibits the activity of the F-actin-capping protein complex formed by the CAPZA1 and CAPZB heterodimer. This is Myotrophin (MTPN) from Bos taurus (Bovine).